A 282-amino-acid chain; its full sequence is tRNA (guanine-N(7)-)-methyltransferase (282 aa).

The segment at 1–29 is disordered; that stretch reads MPHAPAKRQKREEYKNALHEDESNAALPK. The span at 10-22 shows a compositional bias: basic and acidic residues; that stretch reads KREEYKNALHEDE. S-adenosyl-L-methionine-binding positions include Gly104, 153 to 154, and Cys173; that span reads NT. The active site involves Asp176. 255–257 serves as a coordination point for S-adenosyl-L-methionine; sequence TEE.

The protein belongs to the class I-like SAM-binding methyltransferase superfamily. TrmB family. As to quaternary structure, forms a complex with TRM82.

The protein localises to the nucleus. The enzyme catalyses guanosine(46) in tRNA + S-adenosyl-L-methionine = N(7)-methylguanosine(46) in tRNA + S-adenosyl-L-homocysteine. The protein operates within tRNA modification; N(7)-methylguanine-tRNA biosynthesis. Functionally, catalyzes the formation of N(7)-methylguanine at position 46 (m7G46) in tRNA. This is tRNA (guanine-N(7)-)-methyltransferase from Phaeosphaeria nodorum (strain SN15 / ATCC MYA-4574 / FGSC 10173) (Glume blotch fungus).